A 227-amino-acid polypeptide reads, in one-letter code: Phosphoribosylformylglycinamidine synthase subunit PurQ (227 aa).

Positions 2–226 (KFAVIQFPGS…VQAWKEEQVN (225 aa)) constitute a Glutamine amidotransferase type-1 domain. Catalysis depends on C86, which acts as the Nucleophile. Residues H195 and E197 contribute to the active site.

As to quaternary structure, part of the FGAM synthase complex composed of 1 PurL, 1 PurQ and 2 PurS subunits.

The protein resides in the cytoplasm. It carries out the reaction N(2)-formyl-N(1)-(5-phospho-beta-D-ribosyl)glycinamide + L-glutamine + ATP + H2O = 2-formamido-N(1)-(5-O-phospho-beta-D-ribosyl)acetamidine + L-glutamate + ADP + phosphate + H(+). The enzyme catalyses L-glutamine + H2O = L-glutamate + NH4(+). Its pathway is purine metabolism; IMP biosynthesis via de novo pathway; 5-amino-1-(5-phospho-D-ribosyl)imidazole from N(2)-formyl-N(1)-(5-phospho-D-ribosyl)glycinamide: step 1/2. In terms of biological role, part of the phosphoribosylformylglycinamidine synthase complex involved in the purines biosynthetic pathway. Catalyzes the ATP-dependent conversion of formylglycinamide ribonucleotide (FGAR) and glutamine to yield formylglycinamidine ribonucleotide (FGAM) and glutamate. The FGAM synthase complex is composed of three subunits. PurQ produces an ammonia molecule by converting glutamine to glutamate. PurL transfers the ammonia molecule to FGAR to form FGAM in an ATP-dependent manner. PurS interacts with PurQ and PurL and is thought to assist in the transfer of the ammonia molecule from PurQ to PurL. This chain is Phosphoribosylformylglycinamidine synthase subunit PurQ, found in Listeria welshimeri serovar 6b (strain ATCC 35897 / DSM 20650 / CCUG 15529 / CIP 8149 / NCTC 11857 / SLCC 5334 / V8).